Reading from the N-terminus, the 176-residue chain is Peroxiredoxin AHP1 (176 aa).

The residue at position 2 (Ser-2) is an N-acetylserine. The Thioredoxin domain occupies 9–176 (FPAGDYKFQY…SSVESVLAHL (168 aa)). Ser-28 carries the phosphoserine modification. Lys-32 participates in a covalent cross-link: Glycyl lysine isopeptide (Lys-Gly) (interchain with G-Cter in URM1). Lys-48 is covalently cross-linked (Glycyl lysine isopeptide (Lys-Gly) (interchain with G-Cter in ubiquitin); alternate). Lys-48 is covalently cross-linked (Glycyl lysine isopeptide (Lys-Gly) (interchain with G-Cter in URM1); alternate). Ser-59 is modified (phosphoserine). Cys-62 (cysteine sulfenic acid (-SOH) intermediate) is an active-site residue. Cys-62 is subject to Cysteine persulfide. Lys-79 is covalently cross-linked (Glycyl lysine isopeptide (Lys-Gly) (interchain with G-Cter in URM1)). Lys-81 is covalently cross-linked (Glycyl lysine isopeptide (Lys-Gly) (interchain with G-Cter in ubiquitin); alternate). Lys-81 participates in a covalent cross-link: Glycyl lysine isopeptide (Lys-Gly) (interchain with G-Cter in URM1); alternate. A Glycyl lysine isopeptide (Lys-Gly) (interchain with G-Cter in URM1) cross-link involves residue Lys-107. A Glycyl lysine isopeptide (Lys-Gly) (interchain with G-Cter in ubiquitin) cross-link involves residue Lys-113. Ser-116 carries the post-translational modification Phosphoserine. Cys-120 bears the Cysteine persulfide mark. Residue Lys-124 forms a Glycyl lysine isopeptide (Lys-Gly) (interchain with G-Cter in URM1) linkage. Lys-156 participates in a covalent cross-link: Glycyl lysine isopeptide (Lys-Gly) (interchain with G-Cter in URM1); alternate. Lys-156 participates in a covalent cross-link: Glycyl lysine isopeptide (Lys-Gly) (interchain with G-Cter in SUMO); alternate.

It belongs to the peroxiredoxin family. Prx5 subfamily. In terms of assembly, homodimer; disulfide-linked, upon oxidation. In terms of processing, conjugated to URM1, a ubiquitin-like protein, in response to oxidative stresses. The attachment of URM1 to lysine residues exclusively depends on the presence of a peroxidatic cysteine in the target protein, with low specificity for the particular residue, motif, or structural context at which urmylation can occur. The URM1-conjugation reaction is mechanistically and directly coupled to the process of cysteine persulfidation, transfering the sulfur atom of the URM1 thiocarboxyl group to redox-active cysteine residues in the target protein if it is exposed to oxidative conditions. Persulfidated on specific redox-active cysteine residues. Persulfidation (also called protein S-sulfhydration) may provide a molecular mechanism that enables cells to protect vulnerable cysteine residues from reactive oxygen species (ROS) under stress conditions.

The protein localises to the cytoplasm. The enzyme catalyses a hydroperoxide + [thioredoxin]-dithiol = an alcohol + [thioredoxin]-disulfide + H2O. Its function is as follows. Thiol-specific peroxidase that catalyzes the reduction of hydrogen peroxide and organic hydroperoxides to water and alcohols, respectively. Plays a role in cell protection against oxidative stress by detoxifying peroxides and as sensor of hydrogen peroxide-mediated signaling events. Preferentially eliminates organic peroxides rather than hydrogen peroxide. Relays alkyl hydroperoxides as a signal to the transcription factor CAD1/YAP2 by inducing the formation of intramolecular disulfide bonds in CAD1, which causes its nuclear accumulation and activation. Involved in cellular Mn(2+) homeostasis. The chain is Peroxiredoxin AHP1 from Saccharomyces cerevisiae (strain ATCC 204508 / S288c) (Baker's yeast).